A 159-amino-acid polypeptide reads, in one-letter code: Phosphopantetheine adenylyltransferase (159 aa).

Thr-10 provides a ligand contact to substrate. ATP-binding positions include 10-11 (TF) and His-18. Substrate is bound by residues Lys-42, Met-74, and Arg-88. ATP-binding positions include 89-91 (GLR), Glu-99, and 124-130 (WSFISSS).

The protein belongs to the bacterial CoaD family. In terms of assembly, homohexamer. Mg(2+) serves as cofactor.

It is found in the cytoplasm. The catalysed reaction is (R)-4'-phosphopantetheine + ATP + H(+) = 3'-dephospho-CoA + diphosphate. The protein operates within cofactor biosynthesis; coenzyme A biosynthesis; CoA from (R)-pantothenate: step 4/5. Reversibly transfers an adenylyl group from ATP to 4'-phosphopantetheine, yielding dephospho-CoA (dPCoA) and pyrophosphate. This chain is Phosphopantetheine adenylyltransferase, found in Salmonella choleraesuis (strain SC-B67).